A 493-amino-acid polypeptide reads, in one-letter code: Probable GTP-binding protein OBGM, mitochondrial (493 aa).

A mitochondrion-targeting transit peptide spans 1–28; sequence MWLIRAIVPVRYLGSYKRPQKPPWMRNP. Residues 48-303 form the Obg domain; the sequence is TRMRDRFTLY…AVLILELKSI (256 aa). 2 disordered regions span residues 65 to 89 and 146 to 215; these read SGCSSVRRSRADRYGKPDGGNGGRG and GEIP…EDDD. Residues 187-196 show a composition bias toward acidic residues; it reads SESDQDDTEQ. In terms of domain architecture, OBG-type G spans 304 to 476; sequence ADVGLVGMPN…LKDGLKMLVD (173 aa). GTP-binding positions include 310 to 317 and 356 to 360; these read GMPNAGKS and DIPGL.

The protein belongs to the TRAFAC class OBG-HflX-like GTPase superfamily. OBG GTPase family.

It is found in the mitochondrion. May bind GTP and have GTPase activity. This Arabidopsis thaliana (Mouse-ear cress) protein is Probable GTP-binding protein OBGM, mitochondrial (ATOBGM).